A 299-amino-acid chain; its full sequence is Oxygen-dependent coproporphyrinogen-III oxidase (299 aa).

Substrate is bound at residue Ser92. Mn(2+)-binding residues include His96 and His106. His106 (proton donor) is an active-site residue. 108-110 is a binding site for substrate; that stretch reads NVR. His145 and His175 together coordinate Mn(2+). Positions 240–275 are important for dimerization; sequence YVEFNLVWDRGTLFGLQTGGRTESILMSMPPLVRWE. A substrate-binding site is contributed by 258–260; sequence GGR.

This sequence belongs to the aerobic coproporphyrinogen-III oxidase family. As to quaternary structure, homodimer. It depends on Mn(2+) as a cofactor.

Its subcellular location is the cytoplasm. It carries out the reaction coproporphyrinogen III + O2 + 2 H(+) = protoporphyrinogen IX + 2 CO2 + 2 H2O. It participates in porphyrin-containing compound metabolism; protoporphyrin-IX biosynthesis; protoporphyrinogen-IX from coproporphyrinogen-III (O2 route): step 1/1. In terms of biological role, involved in the heme biosynthesis. Catalyzes the aerobic oxidative decarboxylation of propionate groups of rings A and B of coproporphyrinogen-III to yield the vinyl groups in protoporphyrinogen-IX. The protein is Oxygen-dependent coproporphyrinogen-III oxidase of Escherichia coli (strain K12 / MC4100 / BW2952).